A 350-amino-acid chain; its full sequence is Ion-translocating oxidoreductase complex subunit D (350 aa).

4 helical membrane-spanning segments follow: residues 37–57 (YFFGFGVLIQVMLAIVVALTA), 68–88 (AVLSTISDNSALLTAILIGVA), 89–109 (IPPIAPWWLVVIGTLFAIVLV), and 120–140 (IFNPAMAAYVMLLISFPVQMT). T185 carries the post-translational modification FMN phosphoryl threonine. A run of 5 helical transmembrane segments spans residues 212–232 (GYGVGWFWVNMAYLAGGLIML), 239–259 (WHISFAILGSLFVCSSFGYLL), 265–285 (VGPLLQLFSGATMIAAFFIAT), 291–311 (ATSVKGRLLFGTLIGVMVYVI), and 315–335 (GGYPDAFAFAVLLANLCAPFI).

This sequence belongs to the NqrB/RnfD family. In terms of assembly, the complex is composed of six subunits: RnfA, RnfB, RnfC, RnfD, RnfE and RnfG. The cofactor is FMN.

The protein localises to the cell inner membrane. Functionally, part of a membrane-bound complex that couples electron transfer with translocation of ions across the membrane. The sequence is that of Ion-translocating oxidoreductase complex subunit D from Shewanella pealeana (strain ATCC 700345 / ANG-SQ1).